We begin with the raw amino-acid sequence, 317 residues long: Transaldolase (317 aa).

The active-site Schiff-base intermediate with substrate is lysine 132.

The protein belongs to the transaldolase family. Type 1 subfamily. In terms of assembly, homodimer.

The protein resides in the cytoplasm. It carries out the reaction D-sedoheptulose 7-phosphate + D-glyceraldehyde 3-phosphate = D-erythrose 4-phosphate + beta-D-fructose 6-phosphate. It participates in carbohydrate degradation; pentose phosphate pathway; D-glyceraldehyde 3-phosphate and beta-D-fructose 6-phosphate from D-ribose 5-phosphate and D-xylulose 5-phosphate (non-oxidative stage): step 2/3. Transaldolase is important for the balance of metabolites in the pentose-phosphate pathway. This Shewanella frigidimarina (strain NCIMB 400) protein is Transaldolase.